The primary structure comprises 455 residues: Golgi pH regulator (455 aa).

The next 2 membrane-spanning stretches (helical) occupy residues 5 to 25 (IDSS…WLFF) and 46 to 66 (VTFA…LGVL). The N-linked (GlcNAc...) asparagine glycan is linked to Asn67. A run of 3 helical transmembrane segments spans residues 79 to 99 (LCVI…YFVV), 111 to 131 (LFAC…GDPF), and 150 to 170 (VGVI…VNCP). N-linked (GlcNAc...) asparagine glycosylation is found at Asn180 and Asn243. Transmembrane regions (helical) follow at residues 290–310 (GYFF…NIVF), 343–363 (ISFI…LITL), 378–398 (VIVL…VLLI), and 425–445 (WFDV…YLAH).

This sequence belongs to the Golgi pH regulator (TC 1.A.38) family. Homotrimer.

It localises to the golgi apparatus membrane. It catalyses the reaction iodide(out) = iodide(in). It carries out the reaction chloride(in) = chloride(out). The catalysed reaction is bromide(in) = bromide(out). The enzyme catalyses fluoride(in) = fluoride(out). In terms of biological role, voltage-gated channel that enables the transfer of anions such as iodide, chloride, bromide and fluoride which may function in counter-ion conductance and participates in Golgi acidification. The sequence is that of Golgi pH regulator from Gallus gallus (Chicken).